We begin with the raw amino-acid sequence, 138 residues long: uncharacterized protein (138 aa).

The disordered stretch occupies residues 89–138 (DDYEDDFEDSDFQDGDFDDFEDEDGFDDDDDFEDDDFEYEDEDNDLDFDE).

This is an uncharacterized protein from Treponema pallidum (strain Nichols).